The following is a 121-amino-acid chain: Putative iron-sulfur cluster insertion protein ErpA (121 aa).

Iron-sulfur cluster-binding residues include Cys49, Cys113, and Cys115.

It belongs to the HesB/IscA family. As to quaternary structure, homodimer. The cofactor is iron-sulfur cluster.

Required for insertion of 4Fe-4S clusters. The sequence is that of Putative iron-sulfur cluster insertion protein ErpA from Paraburkholderia phymatum (strain DSM 17167 / CIP 108236 / LMG 21445 / STM815) (Burkholderia phymatum).